Reading from the N-terminus, the 332-residue chain is Ribosomal RNA small subunit methyltransferase C (332 aa).

Belongs to the methyltransferase superfamily. RsmC family. As to quaternary structure, monomer.

It is found in the cytoplasm. It carries out the reaction guanosine(1207) in 16S rRNA + S-adenosyl-L-methionine = N(2)-methylguanosine(1207) in 16S rRNA + S-adenosyl-L-homocysteine + H(+). Its function is as follows. Specifically methylates the guanine in position 1207 of 16S rRNA in the 30S particle. The sequence is that of Ribosomal RNA small subunit methyltransferase C from Pseudomonas putida (strain ATCC 47054 / DSM 6125 / CFBP 8728 / NCIMB 11950 / KT2440).